Reading from the N-terminus, the 372-residue chain is E3 ubiquitin-protein ligase RNF34 (372 aa).

The segment at 56 to 107 (EGPNIVCKACGLSFSVFRKKHVCCDCKKDFCSVCSVLQENLRRCSTCHLLQE) adopts an FYVE-type zinc-finger fold. The region spanning 115–134 (LMRLKVKDLRQYLILRNIPI) is the SAP 1 domain. Ser169 carries the post-translational modification Phosphoserine. The segment at 194-253 (QGELMDGDQTSRSGVPAQVQSEITSANTEDDDDDDDEDDDDEEENAEDRNPGLSKERVRA) is disordered. Residues 201–220 (DQTSRSGVPAQVQSEITSAN) are compositionally biased toward polar residues. Residues 221-239 (TEDDDDDDDEDDDDEEENA) are compositionally biased toward acidic residues. Basic and acidic residues predominate over residues 240–252 (EDRNPGLSKERVR). Phosphoserine is present on residues Ser254 and Ser256. An SAP 2 domain is found at 264–278 (VEGMSVRQLKEILAR). The RING-type zinc finger occupies 325–360 (CRICMDAVIDCVLLECGHMVTCTKCGKRMSECPICR).

In terms of assembly, interacts with CASP8 and CASP10. Interacts (via RING-type zinc finger) with PPARGC1A. Interacts with NOD1. Interacts with p53/TP53; involved in p53/TP53 ubiquitination. Interacts (via RING-type zinc finger) with MDM2; the interaction stabilizes MDM2. Autoubiquitinated (in vitro). In terms of processing, proteolytically cleaved by caspases upon induction of apoptosis by TNF. Ubiquitous. Detected in heart, brain, liver, skeletal muscle, kidney, pancreas, spleen, thymus, prostate, testis, ovary, colon and leukocytes.

The protein localises to the cell membrane. The protein resides in the endomembrane system. Its subcellular location is the nucleus. It localises to the nucleus speckle. It is found in the cytoplasm. The protein localises to the cytosol. The enzyme catalyses S-ubiquitinyl-[E2 ubiquitin-conjugating enzyme]-L-cysteine + [acceptor protein]-L-lysine = [E2 ubiquitin-conjugating enzyme]-L-cysteine + N(6)-ubiquitinyl-[acceptor protein]-L-lysine.. Its pathway is protein modification; protein ubiquitination. Its function is as follows. E3 ubiquitin-protein ligase that regulates several biological processes through the ubiquitin-mediated proteasomal degradation of various target proteins. Ubiquitinates the caspases CASP8 and CASP10, promoting their proteasomal degradation, to negatively regulate cell death downstream of death domain receptors in the extrinsic pathway of apoptosis. May mediate 'Lys-48'-linked polyubiquitination of RIPK1 and its subsequent proteasomal degradation thereby indirectly regulating the tumor necrosis factor-mediated signaling pathway. Negatively regulates p53/TP53 through its direct ubiquitination and targeting to proteasomal degradation. Indirectly, may also negatively regulate p53/TP53 through ubiquitination and degradation of SFN. Mediates PPARGC1A proteasomal degradation probably through ubiquitination thereby indirectly regulating the metabolism of brown fat cells. Possibly involved in innate immunity, through 'Lys-48'-linked polyubiquitination of NOD1 and its subsequent proteasomal degradation. The polypeptide is E3 ubiquitin-protein ligase RNF34 (Homo sapiens (Human)).